We begin with the raw amino-acid sequence, 507 residues long: Beta-glucosidase 3 (507 aa).

An N-terminal signal peptide occupies residues 1 to 23; it reads MELTLSLLTIFLLFFALSGRCSD. Gln41 is an a beta-D-glucoside binding site. N-linked (GlcNAc...) asparagine glycosylation is present at Asn64. A beta-D-glucoside-binding positions include His138 and 183–184; that span reads NE. Catalysis depends on Glu184, which acts as the Proton donor. The cysteines at positions 203 and 210 are disulfide-linked. N-linked (GlcNAc...) asparagine glycosylation is found at Asn209 and Asn214. A beta-D-glucoside is bound at residue Tyr326. N-linked (GlcNAc...) asparagine glycosylation occurs at Asn361. Position 394 (Glu394) interacts with a beta-D-glucoside. Catalysis depends on Glu394, which acts as the Nucleophile. Residue Asn429 is glycosylated (N-linked (GlcNAc...) asparagine). The a beta-D-glucoside site is built by Trp439 and Phe455. Residues Asn461, Asn485, and Asn500 are each glycosylated (N-linked (GlcNAc...) asparagine).

Belongs to the glycosyl hydrolase 1 family.

The enzyme catalyses Hydrolysis of terminal, non-reducing beta-D-glucosyl residues with release of beta-D-glucose.. This chain is Beta-glucosidase 3, found in Arabidopsis thaliana (Mouse-ear cress).